An 89-amino-acid chain; its full sequence is Putative defensin-like protein 230 (89 aa).

The first 26 residues, 1–26 (MRSVIWFIVSYTLMLLVLRGGKEVEA), serve as a signal peptide directing secretion. 4 disulfides stabilise this stretch: Cys-30–Cys-84, Cys-40–Cys-65, Cys-48–Cys-78, and Cys-63–Cys-80.

The protein belongs to the DEFL family.

The protein localises to the secreted. In Arabidopsis thaliana (Mouse-ear cress), this protein is Putative defensin-like protein 230 (SCRL24).